We begin with the raw amino-acid sequence, 568 residues long: Acyl-CoA ligase gloD (568 aa).

Residues 211 to 219, 352 to 357, Asp-436, Arg-455, and Lys-553 each bind ATP; these read TSGTSGFLK and PGYGLT. The segment at 282–352 is SBD1; that stretch reads DMQIALKSVQ…QLCPEWEINP (71 aa). Residues 353–415 are SBD2; it reads GYGLTESFVC…VRSPSVMKEY (63 aa).

It belongs to the ATP-dependent AMP-binding enzyme family.

Its pathway is mycotoxin biosynthesis. Acyl-CoA ligase; part of the gene cluster that mediates the biosynthesis of pneumocandins, lipohexapeptides of the echinocandin family that prevent fungal cell wall formation by non-competitive inhibition of beta-1,3-glucan synthase. The 10,12-dimethylmyristoyl side chain is synthesized by the reducing polyketide synthase gloL/GLPKS4. The thioesterase gloN/GLHYD exclusively interacts with gloL/GLPKS4 to maintain turnover of the polyketide side chain. The 10R,12S-dimethylmyristic acid is then transferred to the first thiolation domain of the nonribosomal peptide synthetase gloA/GLNRPS4 by the acyl-AMP ligase gloD/GLligase, followed by its acylation to L-ornithine to trigger elongation of the cyclic hexapeptide. L-ornithine, 4R-hydroxyl-L-proline (generated from L-proline by the dioxygenase gloF/GLOXY2), 3S-hydroxyl-L-homotyrosine (generated by gloG/GLHtyB, gloH/GLHtyA, gloI/GLHtyC, gloJ/GLHtyD and hydroxylated at C-3 by the dioxygenase gloM/GLOXY1), 3R-hydroxyl-L-glutamine (generated from L-glutamine probably by the dioxygenase gloE/GLOXY3) and 3S-hydroxyl-L-proline (generated from L-proline by the dioxygenase gloF/GLOXY2 to yield pneumocandin B0), or 3S-hydroxyl-4S-methyl-L-proline (generated from L-leucine by the dioxygenase gloC/GLOXY4 to yield pneumocandin A0) are sequentially added to the growing chain. The last C domain of gloA/GLNRPS4 is proposed to be responsible for cyclization by condensation to form the peptide bond between L-ornithine and 3S-hydroxyl-4S-methyl-L-proline (for pneumocandin A0) or 3S-hydroxyl-L-proline (for pneumocandin B0). Finally, the subsequent C-4 hydroxylation of 3S-hydroxyl-L-homotyrosine and L-ornithine dihydroxylation at C-4 and C-5 are performed by the cytochrome P450 monooxygenases gloP/GLP450-1 and gloO/GLP450-2, respectively. This chain is Acyl-CoA ligase gloD, found in Glarea lozoyensis (strain ATCC 20868 / MF5171).